A 217-amino-acid polypeptide reads, in one-letter code: Uracil-DNA glycosylase (217 aa).

Catalysis depends on D62, which acts as the Proton acceptor.

This sequence belongs to the uracil-DNA glycosylase (UDG) superfamily. UNG family.

The protein localises to the cytoplasm. It carries out the reaction Hydrolyzes single-stranded DNA or mismatched double-stranded DNA and polynucleotides, releasing free uracil.. In terms of biological role, excises uracil residues from the DNA which can arise as a result of misincorporation of dUMP residues by DNA polymerase or due to deamination of cytosine. This is Uracil-DNA glycosylase from Streptococcus sanguinis (strain SK36).